A 365-amino-acid chain; its full sequence is uncharacterized protein (365 aa).

Residues 18 to 46 (TAQEALTLIEKLDSDYKEKEEKITALSVH) adopt a coiled-coil conformation.

This is an uncharacterized protein from Bacillus subtilis (strain 168).